Here is a 95-residue protein sequence, read N- to C-terminus: Blastocyst protein 4 (95 aa).

The first 20 residues, 1 to 20 (MGAVFAIIGGFALDSPILRL), serve as a signal peptide directing secretion.

The sequence is that of Blastocyst protein 4 from Oryctolagus cuniculus (Rabbit).